We begin with the raw amino-acid sequence, 428 residues long: Divergent protein kinase domain 1A (428 aa).

Residues 1 to 27 (MARSLCPGAWLRKPYYLQARFSYVRMK) are Cytoplasmic-facing. The helical transmembrane segment at 28–48 (YLFFSWLVVFVGSWIIYVQYS) threads the bilayer. Residues 49-428 (TYTELCRGKD…WKKISYTNDS (380 aa)) are Lumenal-facing.

Belongs to the DIPK family. In terms of processing, among the many cysteines in the lumenal domain, most are probably involved in disulfide bonds.

It localises to the endoplasmic reticulum membrane. The polypeptide is Divergent protein kinase domain 1A (Homo sapiens (Human)).